The sequence spans 376 residues: Inactive CLIP domain-containing serine protease A28 (376 aa).

A signal peptide spans 1–19 (MKVLLFCIVISLTTLIASG). Residues 24 to 80 (EELRCPGGYCVSKYLCPNGTFIDDIKHAQTTQLIGLRAGLDIDDFDDCNDYLLVCCQ) enclose the Clip domain. 3 cysteine pairs are disulfide-bonded: Cys28/Cys78, Cys33/Cys71, and Cys39/Cys79. Asn41 is a glycosylation site (N-linked (GlcNAc...) asparagine). The disordered stretch occupies residues 85-106 (PTATSTEKPATSDELIEPPPST). Residues 114–364 (NEGGLIYDLR…YVQWLNEHIV (251 aa)) form the Peptidase S1 domain. 2 N-linked (GlcNAc...) asparagine glycosylation sites follow: Asn125 and Asn279. 3 disulfide bridges follow: Cys251/Cys321, Cys280/Cys301, and Cys311/Cys340. Asn369 is a glycosylation site (N-linked (GlcNAc...) asparagine).

Belongs to the peptidase S1 family. CLIP subfamily. As to quaternary structure, may form a heterodimer of a light chain and a heavy chain; disulfide-linked. Post-translationally, secreted as a full-length protein. Proteolytically cleaved into two chains which probably remain covalently linked. Cleavage is induced by fungus B.bassiana and Gram-positive or Gram-negative bacteria infection.

The protein resides in the secreted. In terms of biological role, inactive serine protease which plays an essential role in the innate immune response against bacteria, fungi and protozoa infection by activating the melanization cascade. In the melanization cascade, acts downstream of TEP1, SPCLIP1 and CLIPA8 to promote CLIPC9 proteolytic cleavage. In the susceptible strain G3, appears to be dispensable for parasite P.berghei ookinete elimination which occurs by lysis. Required for the melanization of Gram-positive and Gram-negative bacteria. Required for the melanization of fungus B.bassiana. This Anopheles gambiae (African malaria mosquito) protein is Inactive CLIP domain-containing serine protease A28.